The following is a 458-amino-acid chain: 3-isopropylmalate dehydratase large subunit (458 aa).

C337, C397, and C400 together coordinate [4Fe-4S] cluster.

It belongs to the aconitase/IPM isomerase family. LeuC type 1 subfamily. Heterodimer of LeuC and LeuD. [4Fe-4S] cluster is required as a cofactor.

It carries out the reaction (2R,3S)-3-isopropylmalate = (2S)-2-isopropylmalate. Its pathway is amino-acid biosynthesis; L-leucine biosynthesis; L-leucine from 3-methyl-2-oxobutanoate: step 2/4. In terms of biological role, catalyzes the isomerization between 2-isopropylmalate and 3-isopropylmalate, via the formation of 2-isopropylmaleate. The protein is 3-isopropylmalate dehydratase large subunit of Leuconostoc mesenteroides subsp. mesenteroides (strain ATCC 8293 / DSM 20343 / BCRC 11652 / CCM 1803 / JCM 6124 / NCDO 523 / NBRC 100496 / NCIMB 8023 / NCTC 12954 / NRRL B-1118 / 37Y).